Consider the following 596-residue polypeptide: Myosin light chain kinase 2, skeletal/cardiac muscle (596 aa).

Positions 1 to 224 (MATENGAVEL…AGQAKMQGDT (224 aa)) are disordered. Alanine 2 carries the post-translational modification N-acetylalanine. Residues 40–63 (DPKKAPDPPTLKKDAKAPASEKGD) are compositionally biased toward basic and acidic residues. Positions 88-104 (EGSAGPPAALPQQTATP) are enriched in low complexity. Phosphoserine occurs at positions 143, 149, and 151. Basic and acidic residues predominate over residues 189–209 (RPAKAEEGKNILAESQKEVGE). One can recognise a Protein kinase domain in the interval 285-540 (MNSKEALGGG…AAQCLAHPWL (256 aa)). ATP-binding positions include 291–299 (LGGGKFGAV) and lysine 314. Aspartate 406 serves as the catalytic Proton acceptor. Threonine 445 bears the Phosphothreonine mark. Residues 574–586 (IAVSAANRFKKIS) form a calmodulin-binding region.

It belongs to the protein kinase superfamily. CAMK Ser/Thr protein kinase family. May interact with centrin. As to expression, heart and skeletal muscles. Increased expression in the apical tissue compared to the interventricular septal tissue.

The protein localises to the cytoplasm. It catalyses the reaction L-seryl-[myosin light chain] + ATP = O-phospho-L-seryl-[myosin light chain] + ADP + H(+). It carries out the reaction L-threonyl-[myosin light chain] + ATP = O-phospho-L-threonyl-[myosin light chain] + ADP + H(+). In terms of biological role, implicated in the level of global muscle contraction and cardiac function. Phosphorylates a specific serine in the N-terminus of a myosin light chain. In Homo sapiens (Human), this protein is Myosin light chain kinase 2, skeletal/cardiac muscle (MYLK2).